A 98-amino-acid polypeptide reads, in one-letter code: Defensin-like protein 219 (98 aa).

Residues 1-16 form the signal peptide; that stretch reads MKTIFVFLTLAVLVSS. 3 disulfides stabilise this stretch: C68-C85, C71-C90, and C75-C92.

It belongs to the DEFL family.

The protein localises to the secreted. The protein is Defensin-like protein 219 of Arabidopsis thaliana (Mouse-ear cress).